A 109-amino-acid chain; its full sequence is Spermidine export protein MdtI (109 aa).

The next 4 membrane-spanning stretches (helical) occupy residues 6–26 (WVHA…NVFL), 36–56 (IFGL…SQAV), 64–84 (AYAL…WILF), and 88–108 (LNRK…MVKL).

This sequence belongs to the drug/metabolite transporter (DMT) superfamily. Small multidrug resistance (SMR) (TC 2.A.7.1) family. MdtI subfamily. In terms of assembly, forms a complex with MdtJ.

The protein resides in the cell inner membrane. Functionally, catalyzes the excretion of spermidine. This Escherichia coli O139:H28 (strain E24377A / ETEC) protein is Spermidine export protein MdtI.